The sequence spans 204 residues: Ras-related protein RabL (204 aa).

A GTP-binding site is contributed by 14–21; it reads GDSNVGKT. Positions 36–44 match the Effector region motif; the sequence is RPPSIGPDY. Residues 62-66 and 120-123 each bind GTP; these read DTCGQ and TKSD. Residues C203 and C204 are each lipidated (S-geranylgeranyl cysteine).

It belongs to the small GTPase superfamily. Rab family.

Its subcellular location is the cell membrane. The chain is Ras-related protein RabL (rabL) from Dictyostelium discoideum (Social amoeba).